Reading from the N-terminus, the 477-residue chain is Aryl-phospho-beta-D-glucosidase BglC (477 aa).

E170 (proton donor) is an active-site residue. Residue E378 is the Nucleophile of the active site.

The protein belongs to the glycosyl hydrolase 1 family.

It carries out the reaction 6-phospho-beta-D-glucosyl-(1-&gt;4)-D-glucose + H2O = D-glucose 6-phosphate + D-glucose. In terms of biological role, is able to catalyze the hydrolysis of aryl-phospho-beta-D-glucosides such as 4-methylumbelliferyl-phospho-beta-D-glucopyranoside (MUG-P), phosphoarbutin and phosphosalicin. Is not essential for growth on arbutin and salicin as the sole carbon source. The polypeptide is Aryl-phospho-beta-D-glucosidase BglC (bglC) (Bacillus subtilis (strain 168)).